The following is a 501-amino-acid chain: MNKSTLNNPVFYVSAFVVFLLVIIGATLPNRFGAVAEKLFHFTTIHFGWFYLLAVFVFVVFLITLSLSKFGKIKLGATLTKPEYSFFTWIGMLFSAGFGAGLVFWGVAEPMSHFFKTPFPAVEAMSEEAARVAMGYAFFHWGVSQWSVFAIVGLVIAYLQFRKKRRGLISTSIQPIIGKNKFIADTVDSLAVIATVMGVATSLGLGILQMNGGLKSVFDVPTSIWVQMAIAGVMLITYLISSSTGLDRGIKWLSNINLGSLFIIIVFVFMAGPTVFILNTFVLGLGDYFSNFIGYSLRLTPYTGDTWVREWTIFYWAWSTAWSPFVGAFIARVSRGRSIRQYVLGVLVVSPAIACIWIAAFGGTAVYNDLMNGTSIAEAVNADIAVALFETYQHLPMTTILSILSIFLIFTFLVTSADSATYILGVMTSRGSLNPTLVTKIVWGLLITAIAVVLLLAGGLEALQTASLISALPFTVILLLMMASFTRMLSKGEKKAEQDKE.

Transmembrane regions (helical) follow at residues 9–29 (PVFYVSAFVVFLLVIIGATLP), 45–65 (IHFGWFYLLAVFVFVVFLITL), 86–106 (FFTWIGMLFSAGFGAGLVFWG), 137–157 (AFFHWGVSQWSVFAIVGLVIA), 190–210 (LAVIATVMGVATSLGLGILQM), 220–240 (VPTSIWVQMAIAGVMLITYLI), 258–278 (LGSLFIIIVFVFMAGPTVFIL), 311–331 (WTIFYWAWSTAWSPFVGAFIA), 343–363 (VLGVLVVSPAIACIWIAAFGG), 395–415 (LPMTTILSILSIFLIFTFLVT), 441–461 (IVWGLLITAIAVVLLLAGGLE), and 465–485 (TASLISALPFTVILLLMMASF).

This sequence belongs to the BCCT transporter (TC 2.A.15) family.

Its subcellular location is the cell inner membrane. Functionally, mediates the import of ectoine and hydroxyectoine, which function as osmotic and cold stress protectants. Also has minor uptake activities for the compatible solutes proline and glycine betaine. This Virgibacillus pantothenticus protein is Ectoine/hydroxyectoine transporter.